The sequence spans 358 residues: Gibberellin 2-beta-dioxygenase 6 (358 aa).

One can recognise a Fe2OG dioxygenase domain in the interval 207–308 (DETTCFLRLN…RLSVAYFLCP (102 aa)). Residue Y218 participates in 2-oxoglutarate binding. Positions 233, 235, and 289 each coordinate Fe cation. Positions 299 and 301 each coordinate 2-oxoglutarate.

The protein belongs to the iron/ascorbate-dependent oxidoreductase family. GA2OX subfamily. It depends on L-ascorbate as a cofactor. Fe(2+) serves as cofactor. In terms of tissue distribution, expressed in panicles. Expressed at low levels in young shoots, leaf blades and elongating internodes.

The protein resides in the cytoplasm. The protein localises to the nucleus. The catalysed reaction is gibberellin A1 + 2-oxoglutarate + O2 = gibberellin A8 + succinate + CO2. Functionally, catalyzes the 2-beta-hydroxylation of several biologically active gibberellins, leading to the homeostatic regulation of their endogenous level. Catabolism of gibberellins (GAs) plays a central role in plant development. In vitro, converts GA12 and GA53 to the corresponding 2-beta-hydroxylated products GA110 and GA97, respectively. The protein is Gibberellin 2-beta-dioxygenase 6 of Oryza sativa subsp. japonica (Rice).